We begin with the raw amino-acid sequence, 355 residues long: Protein-glutamate methylesterase/protein-glutamine glutaminase 3 (355 aa).

Residues 8-123 (SVLIVDDSGM…AREVEDFVDK (116 aa)) form the Response regulatory domain. Position 59 is a 4-aspartylphosphate (aspartate 59). The interval 139–161 (RSAPAAGPTPVPQAPPPPAAPPA) is disordered. Residues 145–159 (GPTPVPQAPPPPAAP) are compositionally biased toward pro residues. One can recognise a CheB-type methylesterase domain in the interval 160–350 (PAGDGGIIAI…ASLLEITGAS (191 aa)). Residues serine 172, histidine 199, and aspartate 292 contribute to the active site.

This sequence belongs to the CheB family. In terms of processing, phosphorylated by CheA. Phosphorylation of the N-terminal regulatory domain activates the methylesterase activity.

It is found in the cytoplasm. The catalysed reaction is [protein]-L-glutamate 5-O-methyl ester + H2O = L-glutamyl-[protein] + methanol + H(+). It catalyses the reaction L-glutaminyl-[protein] + H2O = L-glutamyl-[protein] + NH4(+). Involved in chemotaxis. Part of a chemotaxis signal transduction system that modulates chemotaxis in response to various stimuli. Catalyzes the demethylation of specific methylglutamate residues introduced into the chemoreceptors (methyl-accepting chemotaxis proteins or MCP) by CheR. Also mediates the irreversible deamidation of specific glutamine residues to glutamic acid. This chain is Protein-glutamate methylesterase/protein-glutamine glutaminase 3, found in Paramagnetospirillum magneticum (strain ATCC 700264 / AMB-1) (Magnetospirillum magneticum).